Reading from the N-terminus, the 503-residue chain is Maturase K (503 aa).

This sequence belongs to the intron maturase 2 family. MatK subfamily.

It localises to the plastid. The protein localises to the chloroplast. In terms of biological role, usually encoded in the trnK tRNA gene intron. Probably assists in splicing its own and other chloroplast group II introns. This Vicia villosa (Hairy vetch) protein is Maturase K.